Consider the following 161-residue polypeptide: Zinc finger protein KNUCKLES (161 aa).

Residues 1–33 are disordered; it reads MAEPPPSYLHFVGPAKTRSSSKRHSFSSSAHPA. Residues 38-60 form a C2H2-type zinc finger; it reads FPCQYCPRKFYTSQALGGHQNAH. The disordered stretch occupies residues 142–161; sequence GGNGVMEEDEPLDLDLSLRL. Residues 155–159 carry the EAR-like (transcriptional repression) motif; it reads LDLSL.

As to expression, first expressed in developing carpel primordia, and later in stamens and ovules of flower buds.

It is found in the nucleus. In terms of biological role, may function as a transcriptional repressor of cellular proliferation that regulates floral determinacy and relative size of basal pattern elements along the proximo-distal axis of the developing gynoecium. This is Zinc finger protein KNUCKLES (KNU) from Arabidopsis thaliana (Mouse-ear cress).